A 696-amino-acid chain; its full sequence is MEKTEKNELVRKLIFNPQGDREASKRKIIKGNPTNIFELNEIKYSWAFDLYKLMGFTNFWIPEEIQMLEDRKQYETVLSDYEKRAYELVLSFLIALDSFQVDMLKEFGRMITAPEVEMAITAQEFQESVHAYSYQFILESVVDPVKADEIYNYWREDERLLERNKVIAELYNEFIRKPNEENFIKATIGNYILESLYFYSGFAFFYTLGRQGKMRNTVQQIKYINRDELCFIEGTEVLTKRGFVDFRELREDDLVAQYDIETGEISWTKPYAYVERDYEGSMYRLKHPKSNWEVVATEGHEFIVRNLKTGKERKEPIEKVKLHPYSAIPVAGRYTGEVEEYDLWELVSGKGITLKTRSAVKNKLTPIEKLLIVLQADGTIDSKRNGKFTGFQQLKFFFSKYRKINEFEKILNECAPYGIKWKKYERQDGIAYTVYYPNDLPIKPTKFFDEWVRLDEITEEWIREFVEELVKWDGHIPKDRNKKKVYYYSTKEKRNKDFVQALCALGGMRTVVSRERNPKAKNPVYRIWIYLEDDYINTQTMVKEEFYYKGKVYCVSVPKGNIVVRYKDSVCIAGNCHVTLFRNIINTLRKENPELFTPEIEKWIVEYFKYAVNEEIKWGQYVTQNQILGINDVLIERYIKYLGNLRITQIGFDPIYPEVTENPLKWIDEFRKINNTKTDFFQAKPQTYSKANELKW.

3 residues coordinate Fe cation: Asp-97, Glu-127, and His-130. Tyr-134 is an active-site residue. Residues Glu-194 and Glu-228 each contribute to the Fe cation site. The DOD-type homing endonuclease domain occupies 377 to 507; sequence DGTIDSKRNG…FVQALCALGG (131 aa). Position 577 (His-577) interacts with Fe cation.

It belongs to the ribonucleoside diphosphate reductase small chain family. Tetramer of two alpha and two beta subunits. The cofactor is Fe cation. In terms of processing, this protein undergoes a protein self splicing that involves a post-translational excision of the intervening region (intein) followed by peptide ligation.

The enzyme catalyses a 2'-deoxyribonucleoside 5'-diphosphate + [thioredoxin]-disulfide + H2O = a ribonucleoside 5'-diphosphate + [thioredoxin]-dithiol. Functionally, provides the precursors necessary for DNA synthesis. Catalyzes the biosynthesis of deoxyribonucleotides from the corresponding ribonucleotides. The sequence is that of Ribonucleoside-diphosphate reductase subunit beta (nrdB) from Aquifex aeolicus (strain VF5).